A 644-amino-acid chain; its full sequence is 1,4-alpha-glucan branching enzyme GlgB (644 aa).

The active-site Nucleophile is aspartate 309. Glutamate 362 acts as the Proton donor in catalysis.

It belongs to the glycosyl hydrolase 13 family. GlgB subfamily. Monomer.

The catalysed reaction is Transfers a segment of a (1-&gt;4)-alpha-D-glucan chain to a primary hydroxy group in a similar glucan chain.. It functions in the pathway glycan biosynthesis; glycogen biosynthesis. Catalyzes the formation of the alpha-1,6-glucosidic linkages in glycogen by scission of a 1,4-alpha-linked oligosaccharide from growing alpha-1,4-glucan chains and the subsequent attachment of the oligosaccharide to the alpha-1,6 position. In Cutibacterium acnes (strain DSM 16379 / KPA171202) (Propionibacterium acnes), this protein is 1,4-alpha-glucan branching enzyme GlgB.